The primary structure comprises 219 residues: Holliday junction branch migration complex subunit RuvA (219 aa).

The segment at 1 to 71 is domain I; it reads MISWIKGELV…EDSDMLFGFS (71 aa). A domain II region spans residues 72–150; the sequence is TKDQRDFFIQ…NKEIEKENLN (79 aa). The flexible linker stretch occupies residues 151-161; sequence INNFLEKNKDL. The interval 161–219 is domain III; that stretch reads LDSIFKDIDLTLQSLNYSKKEIKNLFPKLINNIKNSSLEKESISFENLLKEAMNYLDHK.

This sequence belongs to the RuvA family. Homotetramer. Forms an RuvA(8)-RuvB(12)-Holliday junction (HJ) complex. HJ DNA is sandwiched between 2 RuvA tetramers; dsDNA enters through RuvA and exits via RuvB. An RuvB hexamer assembles on each DNA strand where it exits the tetramer. Each RuvB hexamer is contacted by two RuvA subunits (via domain III) on 2 adjacent RuvB subunits; this complex drives branch migration. In the full resolvosome a probable DNA-RuvA(4)-RuvB(12)-RuvC(2) complex forms which resolves the HJ.

The protein resides in the cytoplasm. In terms of biological role, the RuvA-RuvB-RuvC complex processes Holliday junction (HJ) DNA during genetic recombination and DNA repair, while the RuvA-RuvB complex plays an important role in the rescue of blocked DNA replication forks via replication fork reversal (RFR). RuvA specifically binds to HJ cruciform DNA, conferring on it an open structure. The RuvB hexamer acts as an ATP-dependent pump, pulling dsDNA into and through the RuvAB complex. HJ branch migration allows RuvC to scan DNA until it finds its consensus sequence, where it cleaves and resolves the cruciform DNA. This is Holliday junction branch migration complex subunit RuvA from Prochlorococcus marinus subsp. pastoris (strain CCMP1986 / NIES-2087 / MED4).